The following is an 86-amino-acid chain: Mitochondrial import inner membrane translocase subunit Tim10 (86 aa).

Residues Cys29 to Cys54 carry the Twin CX3C motif motif. Disulfide bonds link Cys29–Cys54 and Cys33–Cys50.

The protein belongs to the small Tim family. Heterohexamer; composed of 3 copies of tim-9/tin-9.1 and 3 copies of tim-10/tin-10, named soluble 70 kDa complex. The complex associates with the tim-22 component of the TIM22 complex. Interacts with multi-pass transmembrane proteins in transit.

It localises to the mitochondrion inner membrane. Its function is as follows. Mitochondrial intermembrane chaperone that participates in the import and insertion of multi-pass transmembrane proteins into the mitochondrial inner membrane. May also be required for the transfer of beta-barrel precursors from the TOM complex to the sorting and assembly machinery (SAM complex) of the outer membrane. Acts as a chaperone-like protein that protects the hydrophobic precursors from aggregation and guide them through the mitochondrial intermembrane space. This is Mitochondrial import inner membrane translocase subunit Tim10 (tin-10) from Caenorhabditis elegans.